A 114-amino-acid polypeptide reads, in one-letter code: MAEITSAKAMARTVRVSPRKTRLVLDLIRGKNVADAIAILKFTPNKAARIVEKTLNSAVANAENNFGLEKANLVVSETFANEGPTMKRFRPRAKGSASPINKRTTHVTVVVEEK.

It belongs to the universal ribosomal protein uL22 family. As to quaternary structure, part of the 50S ribosomal subunit.

Its function is as follows. This protein binds specifically to 23S rRNA; its binding is stimulated by other ribosomal proteins, e.g. L4, L17, and L20. It is important during the early stages of 50S assembly. It makes multiple contacts with different domains of the 23S rRNA in the assembled 50S subunit and ribosome. Functionally, the globular domain of the protein is located near the polypeptide exit tunnel on the outside of the subunit, while an extended beta-hairpin is found that lines the wall of the exit tunnel in the center of the 70S ribosome. The polypeptide is Large ribosomal subunit protein uL22 (Streptococcus mutans serotype c (strain ATCC 700610 / UA159)).